Reading from the N-terminus, the 401-residue chain is L-rhamnonate dehydratase (401 aa).

Residues His29 and Arg55 each contribute to the substrate site. Mg(2+)-binding residues include Asp222, Glu248, and Glu276. Catalysis depends on His325, which acts as the Proton acceptor. A substrate-binding site is contributed by Glu345.

Belongs to the mandelate racemase/muconate lactonizing enzyme family. RhamD subfamily. As to quaternary structure, homooctamer; tetramer of dimers. Mg(2+) is required as a cofactor.

The catalysed reaction is L-rhamnonate = 2-dehydro-3-deoxy-L-rhamnonate + H2O. In terms of biological role, catalyzes the dehydration of L-rhamnonate to 2-keto-3-deoxy-L-rhamnonate (KDR). This is L-rhamnonate dehydratase from Escherichia coli O157:H7.